The sequence spans 732 residues: Catalase-peroxidase (732 aa).

A disordered region spans residues 1–23 (MSEQSRCPVTGRTADSPATGSGL). The segment at residues 97-220 (WHSAGTYRTS…LAAVQMGLIY (124 aa)) is a cross-link (tryptophyl-tyrosyl-methioninium (Trp-Tyr) (with M-246)). His98 functions as the Proton acceptor in the catalytic mechanism. The tryptophyl-tyrosyl-methioninium (Tyr-Met) (with W-97) cross-link spans 220–246 (YVNPEGPDGKPDPVAAGRDIRETFARM). His261 contacts heme b.

The protein belongs to the peroxidase family. Peroxidase/catalase subfamily. In terms of assembly, homodimer or homotetramer. Requires heme b as cofactor. Post-translationally, formation of the three residue Trp-Tyr-Met cross-link is important for the catalase, but not the peroxidase activity of the enzyme.

The enzyme catalyses H2O2 + AH2 = A + 2 H2O. It catalyses the reaction 2 H2O2 = O2 + 2 H2O. In terms of biological role, bifunctional enzyme with both catalase and broad-spectrum peroxidase activity. This Prosthecochloris aestuarii (strain DSM 271 / SK 413) protein is Catalase-peroxidase.